Reading from the N-terminus, the 88-residue chain is Large ribosomal subunit protein bL27 (88 aa).

The interval 1-24 is disordered; the sequence is MAHKKGTGSTRNGRDSNAKRLGVK.

The protein belongs to the bacterial ribosomal protein bL27 family.

The protein is Large ribosomal subunit protein bL27 of Synechococcus sp. (strain CC9605).